The sequence spans 55 residues: Large ribosomal subunit protein bL33 (55 aa).

Belongs to the bacterial ribosomal protein bL33 family.

This is Large ribosomal subunit protein bL33 from Bifidobacterium longum (strain DJO10A).